Here is a 242-residue protein sequence, read N- to C-terminus: Ribosomal RNA small subunit methyltransferase G (242 aa).

Residues Gly-78, Leu-83, Ala-130–Glu-131, and Arg-151 contribute to the S-adenosyl-L-methionine site.

It belongs to the methyltransferase superfamily. RNA methyltransferase RsmG family.

The protein resides in the cytoplasm. Specifically methylates the N7 position of guanine in position 518 of 16S rRNA. In Salinispora tropica (strain ATCC BAA-916 / DSM 44818 / JCM 13857 / NBRC 105044 / CNB-440), this protein is Ribosomal RNA small subunit methyltransferase G.